Here is a 404-residue protein sequence, read N- to C-terminus: NADH-quinone oxidoreductase subunit D 2 (404 aa).

This sequence belongs to the complex I 49 kDa subunit family. As to quaternary structure, NDH-1 is composed of 14 different subunits. Subunits NuoB, C, D, E, F, and G constitute the peripheral sector of the complex.

It is found in the cell inner membrane. The catalysed reaction is a quinone + NADH + 5 H(+)(in) = a quinol + NAD(+) + 4 H(+)(out). In terms of biological role, NDH-1 shuttles electrons from NADH, via FMN and iron-sulfur (Fe-S) centers, to quinones in the respiratory chain. The immediate electron acceptor for the enzyme in this species is believed to be ubiquinone. Couples the redox reaction to proton translocation (for every two electrons transferred, four hydrogen ions are translocated across the cytoplasmic membrane), and thus conserves the redox energy in a proton gradient. The polypeptide is NADH-quinone oxidoreductase subunit D 2 (Rhizobium etli (strain ATCC 51251 / DSM 11541 / JCM 21823 / NBRC 15573 / CFN 42)).